The sequence spans 242 residues: Small ribosomal subunit protein uS2 (242 aa).

It belongs to the universal ribosomal protein uS2 family.

This chain is Small ribosomal subunit protein uS2, found in Shewanella putrefaciens (strain CN-32 / ATCC BAA-453).